A 643-amino-acid polypeptide reads, in one-letter code: Ecto-NOX disulfide-thiol exchanger 1 (643 aa).

An RRM domain is found at lysine 142–alanine 221. Coiled-coil stretches lie at residues valine 307–isoleucine 342 and glutamine 425–glycine 521.

The protein belongs to the ENOX family. Cu cation serves as cofactor.

It localises to the cell membrane. The protein resides in the secreted. It is found in the extracellular space. Not inhibited by the antitumor sulfonylurea LY181984, the vabilloid capsaicin, and retinoids. Probably acts as a terminal oxidase of plasma electron transport from cytosolic NAD(P)H via hydroquinones to acceptors at the cell surface. Hydroquinone oxidase activity alternates with a protein disulfide-thiol interchange/oxidoreductase activity which may control physical membrane displacements associated with vesicle budding or cell enlargement. The activities oscillate with a period length of 24 minutes and play a role in control of the ultradian cellular biological clock. The chain is Ecto-NOX disulfide-thiol exchanger 1 (Enox1) from Mus musculus (Mouse).